We begin with the raw amino-acid sequence, 584 residues long: Arginine--tRNA ligase (584 aa).

A 'HIGH' region motif is present at residues 127 to 137 (PNLAKEMHVGH).

The protein belongs to the class-I aminoacyl-tRNA synthetase family. As to quaternary structure, monomer.

It is found in the cytoplasm. The enzyme catalyses tRNA(Arg) + L-arginine + ATP = L-arginyl-tRNA(Arg) + AMP + diphosphate. The sequence is that of Arginine--tRNA ligase from Alcanivorax borkumensis (strain ATCC 700651 / DSM 11573 / NCIMB 13689 / SK2).